We begin with the raw amino-acid sequence, 270 residues long: Acyl-[acyl-carrier-protein]--UDP-N-acetylglucosamine O-acyltransferase (270 aa).

The protein belongs to the transferase hexapeptide repeat family. LpxA subfamily. Homotrimer.

The protein resides in the cytoplasm. It carries out the reaction a (3R)-hydroxyacyl-[ACP] + UDP-N-acetyl-alpha-D-glucosamine = a UDP-3-O-[(3R)-3-hydroxyacyl]-N-acetyl-alpha-D-glucosamine + holo-[ACP]. It participates in glycolipid biosynthesis; lipid IV(A) biosynthesis; lipid IV(A) from (3R)-3-hydroxytetradecanoyl-[acyl-carrier-protein] and UDP-N-acetyl-alpha-D-glucosamine: step 1/6. Functionally, involved in the biosynthesis of lipid A, a phosphorylated glycolipid that anchors the lipopolysaccharide to the outer membrane of the cell. This is Acyl-[acyl-carrier-protein]--UDP-N-acetylglucosamine O-acyltransferase from Helicobacter pylori (strain G27).